A 292-amino-acid polypeptide reads, in one-letter code: uncharacterized protein (292 aa).

Positions 1 to 59 (MTITQLKVFVKIAETGSFTKAGQALNMTQPAVSHAISAIEAELDVKLIIRDRRNGLMLT) constitute an HTH lysR-type domain. A DNA-binding region (H-T-H motif) is located at residues 18–37 (FTKAGQALNMTQPAVSHAIS).

This sequence belongs to the LysR transcriptional regulatory family.

This is an uncharacterized protein from Bacillus subtilis (strain 168).